We begin with the raw amino-acid sequence, 88 residues long: Cell division topological specificity factor (88 aa).

Belongs to the MinE family.

Its function is as follows. Prevents the cell division inhibition by proteins MinC and MinD at internal division sites while permitting inhibition at polar sites. This ensures cell division at the proper site by restricting the formation of a division septum at the midpoint of the long axis of the cell. This Acidovorax ebreus (strain TPSY) (Diaphorobacter sp. (strain TPSY)) protein is Cell division topological specificity factor.